A 200-amino-acid polypeptide reads, in one-letter code: MASTENPDPETGKSEPIPASATTPPPSAASFLDCRKIDVIIRVLLFSATLTALIVMVTSDQTEKTQLPGVSSPAPVSAEFNDSPAFIFFVVALVVTSFYALMSTLVSISLLLKPEFTARVSVYLASLDMVMLGILASATGTAGGVAYIALKGNKEVGWNKICNVYDKFCRYIATSLALSLFATLLLLVLSICSALSKRTP.

Residues 1 to 26 (MASTENPDPETGKSEPIPASATTPPP) form a disordered region. At 1 to 36 (MASTENPDPETGKSEPIPASATTPPPSAASFLDCRK) the chain is on the cytoplasmic side. A helical transmembrane segment spans residues 37 to 57 (IDVIIRVLLFSATLTALIVMV). Over 58-85 (TSDQTEKTQLPGVSSPAPVSAEFNDSPA) the chain is Extracellular. A helical transmembrane segment spans residues 86–106 (FIFFVVALVVTSFYALMSTLV). The Cytoplasmic portion of the chain corresponds to 107-129 (SISLLLKPEFTARVSVYLASLDM). Residues 130–150 (VMLGILASATGTAGGVAYIAL) traverse the membrane as a helical segment. Residues 151 to 171 (KGNKEVGWNKICNVYDKFCRY) are Extracellular-facing. The chain crosses the membrane as a helical span at residues 172 to 192 (IATSLALSLFATLLLLVLSIC). At 193 to 200 (SALSKRTP) the chain is on the cytoplasmic side.

The protein belongs to the Casparian strip membrane proteins (CASP) family. In terms of assembly, homodimer and heterodimers.

The protein localises to the cell membrane. The protein is CASP-like protein 1D2 of Arabidopsis lyrata subsp. lyrata (Lyre-leaved rock-cress).